Reading from the N-terminus, the 154-residue chain is 6,7-dimethyl-8-ribityllumazine synthase (154 aa).

Residues phenylalanine 23, 57–59, and 81–83 contribute to the 5-amino-6-(D-ribitylamino)uracil site; these read AFE and AII. 86–87 lines the (2S)-2-hydroxy-3-oxobutyl phosphate pocket; that stretch reads ST. The active-site Proton donor is the histidine 89. Position 114 (phenylalanine 114) interacts with 5-amino-6-(D-ribitylamino)uracil. Arginine 128 is a (2S)-2-hydroxy-3-oxobutyl phosphate binding site.

This sequence belongs to the DMRL synthase family.

The catalysed reaction is (2S)-2-hydroxy-3-oxobutyl phosphate + 5-amino-6-(D-ribitylamino)uracil = 6,7-dimethyl-8-(1-D-ribityl)lumazine + phosphate + 2 H2O + H(+). It participates in cofactor biosynthesis; riboflavin biosynthesis; riboflavin from 2-hydroxy-3-oxobutyl phosphate and 5-amino-6-(D-ribitylamino)uracil: step 1/2. In terms of biological role, catalyzes the formation of 6,7-dimethyl-8-ribityllumazine by condensation of 5-amino-6-(D-ribitylamino)uracil with 3,4-dihydroxy-2-butanone 4-phosphate. This is the penultimate step in the biosynthesis of riboflavin. This chain is 6,7-dimethyl-8-ribityllumazine synthase, found in Nitratiruptor sp. (strain SB155-2).